The chain runs to 284 residues: uncharacterized protein (284 aa).

Q54 is an FMN binding site. Catalysis depends on C83, which acts as the Proton donor. FMN-binding positions include K125, H153, 183 to 185, and 207 to 208; these read NGG and AN.

It belongs to the Dus family. FMN is required as a cofactor.

Catalyzes the synthesis of dihydrouridine, a modified base found in the D-loop of most tRNAs. This is an uncharacterized protein from Caenorhabditis elegans.